Here is a 465-residue protein sequence, read N- to C-terminus: ATP synthase subunit beta (465 aa).

An ATP-binding site is contributed by 148–155 (GGAGVGKT).

Belongs to the ATPase alpha/beta chains family. As to quaternary structure, F-type ATPases have 2 components, CF(1) - the catalytic core - and CF(0) - the membrane proton channel. CF(1) has five subunits: alpha(3), beta(3), gamma(1), delta(1), epsilon(1). CF(0) has three main subunits: a(1), b(2) and c(9-12). The alpha and beta chains form an alternating ring which encloses part of the gamma chain. CF(1) is attached to CF(0) by a central stalk formed by the gamma and epsilon chains, while a peripheral stalk is formed by the delta and b chains.

It localises to the cell inner membrane. It catalyses the reaction ATP + H2O + 4 H(+)(in) = ADP + phosphate + 5 H(+)(out). Its function is as follows. Produces ATP from ADP in the presence of a proton gradient across the membrane. The catalytic sites are hosted primarily by the beta subunits. The protein is ATP synthase subunit beta of Neisseria meningitidis serogroup B (strain ATCC BAA-335 / MC58).